Here is a 265-residue protein sequence, read N- to C-terminus: Protein IL-40 (265 aa).

The N-terminal stretch at 1–20 (MGLPGLFCLAVLAASSFSKA) is a signal peptide. N-linked (GlcNAc...) asparagine glycosylation is found at N86 and N132.

Expressed in fetal liver and bone marrow. Expressed in peripheral blood lymphocyte B cells.

It is found in the secreted. In terms of biological role, probable B cell-associated cytokine that plays a role in the regulation of humoral immune responses. Involved in lymphocyte B cell development and immunoglobulin/IgA production. The sequence is that of Protein IL-40 from Homo sapiens (Human).